Here is a 767-residue protein sequence, read N- to C-terminus: MQRPFLLAYLVLSLLFNSALGFPTALVPRGSSSSNITSSGPSSTPFSSATESFSTGTTVTPSSSKYPGSKTETSVSSTTETTIVPTTTTTSVITPSTTTITTTVCSTGTNSAGETTSGCSPKTITTTVPCSTSPSETASESTTTSPTTPVTTVVSTTVVTTEYSTSTKQGGEITTTFVTKNIPTTYLTTIAPTSSVTTVTNFTPTTITTTVCSTGTNSAGETTSGCSPKTVTTTVPCSTGTGEYTTEATAPVTTAVTTTVVTTESSTGTNSAGKTTTSYTTKSVPTTYVFDFGKGILDQSCGGVFSNNGSSQVQLRDVVLMNGTVVYDSNGAWDSSALEEWLQRQKKVSIERIFENIGPSAVYPSILPGVVIASPSQTHPDYFYQWIRDSALTINSIVSHSADPAIETLLQYLNVSFHLQRTNNTLGAGIGYTNDTVALGDPKWNVDNTAFTEPWGRPQNDGPALRSIAILKIIDYIKQSGTDLGAKYPFQSTADIFDDIVRWDLRFIIDHWNSSGFDLWEEVNGMHFFTLLVQLSAVDRSLSYFNASERSSPFVEELRQTRRDISKFLVDPANGFINGKYNYIVETPMIADTLRSGLDISTLLAANTVHDAPSASHLPFDINDPAVLNTLHHLMLHMRSIYPINDSSKNATGIALGRYPEDVYDGYGVGEGNPWVLATCAASTTLYQLIYRHISEQHDLVVPMNNDCSNAFWSELVFSNLTTLGNDEGYLILEFNTPAFNQTIQKIFQLADSFLVKLKATWEQTGN.

The signal sequence occupies residues 1 to 21; that stretch reads MQRPFLLAYLVLSLLFNSALG. Disordered regions lie at residues 29–83 and 125–149; these read RGSS…ETTI and TTTV…PTTP. The segment covering 30–48 has biased composition (low complexity); sequence GSSSSNITSSGPSSTPFSS. Asn35 is a glycosylation site (N-linked (GlcNAc...) asparagine). The span at 49–66 shows a compositional bias: polar residues; that stretch reads ATESFSTGTTVTPSSSKY. Low complexity-rich tracts occupy residues 71 to 83 and 131 to 149; these read TETS…ETTI and STSP…PTTP. Asn308, Asn322, Asn414, Asn423, and Asn434 each carry an N-linked (GlcNAc...) asparagine glycan. The interval 348–691 is h subunit; it reads VSIERIFENI…ASTTLYQLIY (344 aa). Trp455 lines the substrate pocket. N-linked (GlcNAc...) asparagine glycosylation is present at Asn513. Asp518 functions as the Proton acceptor in the catalytic mechanism. Glu521 (proton donor) is an active-site residue. Asn546, Asn645, Asn650, Asn720, and Asn741 each carry an N-linked (GlcNAc...) asparagine glycan. Residues 692 to 767 form a y subunit region; that stretch reads RHISEQHDLV…LKATWEQTGN (76 aa).

It belongs to the glycosyl hydrolase 15 family.

The enzyme catalyses Hydrolysis of terminal (1-&gt;4)-linked alpha-D-glucose residues successively from non-reducing ends of the chains with release of beta-D-glucose.. The protein is Glucoamylase S1 (STA1) of Saccharomyces cerevisiae (Baker's yeast).